Reading from the N-terminus, the 137-residue chain is Prostate and testis expressed protein 13 (137 aa).

Residues 1 to 20 (MFQKLLLSVFIILLMDVGER) form the signal peptide. The UPAR/Ly6 domain occupies 28 to 114 (RHCNLCSHYD…CIDRNYCNDG (87 aa)). Intrachain disulfides connect C30/C60, C33/C41, C48/C84, C87/C104, and C105/C111. N-linked (GlcNAc...) asparagine glycosylation is present at N57.

It belongs to the PATE family. Strongly expressed in the epididymis, including the initial segment, caput, corpus and cauda regions. Weakly expressed in prostate.

It is found in the secreted. This is Prostate and testis expressed protein 13 from Mus musculus (Mouse).